We begin with the raw amino-acid sequence, 47 residues long: Photosystem II reaction center protein K (47 aa).

Positions 1–10 are excised as a propeptide; it reads MASFTLDLLA. Residues 19 to 39 form a helical membrane-spanning segment; it reads FSPLIDILPLIPVFFLLLAFV.

This sequence belongs to the PsbK family. PSII is composed of 1 copy each of membrane proteins PsbA, PsbB, PsbC, PsbD, PsbE, PsbF, PsbH, PsbI, PsbJ, PsbK, PsbL, PsbM, PsbT, PsbX, PsbY, PsbZ, Psb30/Ycf12, peripheral proteins PsbO, CyanoQ (PsbQ), PsbU, PsbV and a large number of cofactors. It forms dimeric complexes.

The protein localises to the cellular thylakoid membrane. Functionally, one of the components of the core complex of photosystem II (PSII). PSII is a light-driven water:plastoquinone oxidoreductase that uses light energy to abstract electrons from H(2)O, generating O(2) and a proton gradient subsequently used for ATP formation. It consists of a core antenna complex that captures photons, and an electron transfer chain that converts photonic excitation into a charge separation. In Parasynechococcus marenigrum (strain WH8102), this protein is Photosystem II reaction center protein K.